A 287-amino-acid chain; its full sequence is 4,4'-diapophytoene synthase (287 aa).

(2E,6E)-farnesyl diphosphate contacts are provided by residues 18–21, Tyr-41, and Arg-45; that span reads HSKS. Mg(2+) contacts are provided by Asp-48 and Asp-52. Gln-165 contributes to the (2E,6E)-farnesyl diphosphate binding site. Asn-168 contributes to the Mg(2+) binding site. (2E,6E)-farnesyl diphosphate is bound at residue Arg-171. Asp-172 lines the Mg(2+) pocket. Tyr-248 contacts (2E,6E)-farnesyl diphosphate.

It belongs to the phytoene/squalene synthase family. CrtM subfamily. It depends on Mg(2+) as a cofactor.

The enzyme catalyses 2 (2E,6E)-farnesyl diphosphate = 15-cis-4,4'-diapophytoene + 2 diphosphate. The protein operates within carotenoid biosynthesis; staphyloxanthin biosynthesis; staphyloxanthin from farnesyl diphosphate: step 1/5. In terms of biological role, involved in the biosynthesis of the yellow-orange carotenoid staphyloxanthin, which plays a role in the virulence via its protective function against oxidative stress. Catalyzes the head-to-head condensation of two molecules of farnesyl diphosphate (FPP) into the colorless C(30) carotenoid 4,4'-diapophytoene (dehydrosqualene). The protein is 4,4'-diapophytoene synthase (crtM) of Staphylococcus aureus (strain bovine RF122 / ET3-1).